We begin with the raw amino-acid sequence, 142 residues long: Large ribosomal subunit protein uL11 (142 aa).

This sequence belongs to the universal ribosomal protein uL11 family. As to quaternary structure, part of the ribosomal stalk of the 50S ribosomal subunit. Interacts with L10 and the large rRNA to form the base of the stalk. L10 forms an elongated spine to which L12 dimers bind in a sequential fashion forming a multimeric L10(L12)X complex. One or more lysine residues are methylated.

Its function is as follows. Forms part of the ribosomal stalk which helps the ribosome interact with GTP-bound translation factors. The sequence is that of Large ribosomal subunit protein uL11 from Vibrio campbellii (strain ATCC BAA-1116).